Reading from the N-terminus, the 160-residue chain is Ribosome-binding factor A (160 aa).

The segment covering 112 to 122 (KARQSDEKVRE) has biased composition (basic and acidic residues). Positions 112-160 (KARQSDEKVREASAGATYAGEADPYRKPDEDETDTEGAVEADETDDTAK) are disordered. A compositionally biased stretch (acidic residues) spans 141 to 160 (EDETDTEGAVEADETDDTAK).

The protein belongs to the RbfA family. In terms of assembly, monomer. Binds 30S ribosomal subunits, but not 50S ribosomal subunits or 70S ribosomes.

Its subcellular location is the cytoplasm. One of several proteins that assist in the late maturation steps of the functional core of the 30S ribosomal subunit. Associates with free 30S ribosomal subunits (but not with 30S subunits that are part of 70S ribosomes or polysomes). Required for efficient processing of 16S rRNA. May interact with the 5'-terminal helix region of 16S rRNA. The polypeptide is Ribosome-binding factor A (Streptomyces coelicolor (strain ATCC BAA-471 / A3(2) / M145)).